Consider the following 357-residue polypeptide: Dihydroorotate dehydrogenase (quinone) (357 aa).

Residues 61 to 65 (AGFDK) and threonine 85 contribute to the FMN site. Residue lysine 65 participates in substrate binding. Position 110–114 (110–114 (NRFGF)) interacts with substrate. Residues asparagine 141 and asparagine 172 each coordinate FMN. Residue asparagine 172 participates in substrate binding. Serine 175 serves as the catalytic Nucleophile. Asparagine 177 contributes to the substrate binding site. FMN contacts are provided by lysine 217 and glycine 245. Substrate is bound at residue 246 to 247 (NT). Residues glycine 268, glycine 297, and 318–319 (YS) contribute to the FMN site.

It belongs to the dihydroorotate dehydrogenase family. Type 2 subfamily. As to quaternary structure, monomer. It depends on FMN as a cofactor.

The protein localises to the cell membrane. The enzyme catalyses (S)-dihydroorotate + a quinone = orotate + a quinol. It functions in the pathway pyrimidine metabolism; UMP biosynthesis via de novo pathway; orotate from (S)-dihydroorotate (quinone route): step 1/1. Functionally, catalyzes the conversion of dihydroorotate to orotate with quinone as electron acceptor. This is Dihydroorotate dehydrogenase (quinone) from Xanthobacter autotrophicus (strain ATCC BAA-1158 / Py2).